The sequence spans 2442 residues: CREB-binding protein (2442 aa).

Disordered stretches follow at residues 1–41 (MAEN…NDLP) and 74–179 (LRGG…CMNA). Alanine 2 is subject to N-acetylalanine. The span at 20 to 30 (PGFSANDSTDF) shows a compositional bias: polar residues. The span at 80-90 (SSINPGIGNVS) shows a compositional bias: low complexity. Phosphoserine is present on serine 121. Residues 122-131 (PLSQGDSSAP) are compositionally biased toward polar residues. Serine 124 carries the post-translational modification Phosphoserine; by ATM. Over residues 136-150 (QAASTSGPTPAASQA) the composition is skewed to low complexity. Positions 151-172 (LNPQAQKQVGLATSSPATSQTG) are enriched in polar residues. Residue arginine 220 is modified to Omega-N-methylarginine. The tract at residues 227 to 410 (PTPAMQGASS…GKACQVAHCA (184 aa)) is interaction with SRCAP. The segment at 266–290 (KMGITGNTSPFGQPFSQAGGQPMGA) is disordered. Over residues 270–284 (TGNTSPFGQPFSQAG) the composition is skewed to polar residues. The TAZ-type 1 zinc finger occupies 347 to 433 (DPEKRKLIQQ…RHDCPVCLPL (87 aa)). Positions 363, 367, 380, 385, 394, 398, 404, 409, 418, 422, 427, and 430 each coordinate Zn(2+). In terms of domain architecture, KIX spans 587-666 (GVRKGWHEHV…KIYKIQKELE (80 aa)). Asymmetric dimethylarginine is present on residues arginine 601 and arginine 625. At lysine 657 the chain carries N6-acetyllysine. Composition is skewed to polar residues over residues 794-805 (LPQNQFPSSSGA) and 814-823 (PAQTGVSQGQ). Residues 794-1083 (LPQNQFPSSS…STSPSQPRKK (290 aa)) are disordered. 2 stretches are compositionally biased toward pro residues: residues 844–860 (PCPP…PPPA) and 876–885 (GMTPPQPAAP). Low complexity-rich tracts occupy residues 886 to 929 (TQPS…VTPQ) and 937 to 952 (PSVA…PTPV). Residues 973 to 988 (PTPSSVASAETNSQQP) are compositionally biased toward polar residues. Residue lysine 998 forms a Glycyl lysine isopeptide (Lys-Gly) (interchain with G-Cter in SUMO1) linkage. The span at 1011–1021 (GESKGEPRSEM) shows a compositional bias: basic and acidic residues. An N6-acetyllysine modification is found at lysine 1014. Serine 1030 bears the Phosphoserine mark. The span at 1032–1059 (VKEETDIAEQKSEPMEVDEKKPEVKVEV) shows a compositional bias: basic and acidic residues. Residues lysine 1033 and lysine 1056 each participate in a glycyl lysine isopeptide (Lys-Gly) (interchain with G-Cter in SUMO1) cross-link. The span at 1066-1078 (SSNGTASQSTSPS) shows a compositional bias: low complexity. A Phosphoserine modification is found at serine 1076. Positions 1085-1192 (FKPEELRQAL…EVFEQEIDPV (108 aa)) constitute a Bromo domain. The interval 1124-1170 (DYFDIVKNPMDLSTIKRKLDTGQYQEPWQYVDDVWLMFNNAWLYNRK) is interaction with histone. The interaction with ASF1A stretch occupies residues 1162 to 1180 (NNAWLYNRKTSRVYKFCSK). The residue at position 1216 (lysine 1216) is an N6-acetyllysine. Residues 1323 to 1700 (KFSAKRLQTT…MLVELHTQGQ (378 aa)) enclose the CBP/p300-type HAT domain. A phosphoserine; by IKKA mark is found at serine 1382 and serine 1386. The tract at residues 1433–1435 (YLD) is interaction with histone. Residues 1434–1436 (LDS), 1446–1447 (RT), isoleucine 1493, arginine 1498, and tryptophan 1502 each bind acetyl-CoA. The tract at residues 1460 to 1891 (YVKKLGYVTG…LPSPTSAPPG (432 aa)) is interaction with TRERF1. Over residues 1556–1568 (LEQEEEERKKEES) the composition is skewed to basic and acidic residues. The interval 1556-1615 (LEQEEEERKKEESTAASETTEGSQGDSKNAKKKNNKKTNKNKSSISRANKKKPSMPNVSN) is disordered. An N6-acetyllysine mark is found at lysine 1583, lysine 1591, lysine 1592, lysine 1595, and lysine 1597. The span at 1585–1595 (AKKKNNKKTNK) shows a compositional bias: basic residues. The segment at 1702 to 1750 (RFVYTCNECKHHVETRWHCTVCEDYDLCINCYNTKSHAHKMVKWGLGLD) adopts a ZZ-type zinc-finger fold. Positions 1707, 1710, 1720, 1723, 1729, 1732, 1738, and 1740 each coordinate Zn(2+). 2 positions are modified to N6-acetyllysine: lysine 1741 and lysine 1744. Serine 1763 carries the post-translational modification Phosphoserine. The segment at 1765–1846 (QESRRLSIQR…KCPVPFCLNI (82 aa)) adopts a TAZ-type 2 zinc-finger fold. 2 disordered regions span residues 1874–1959 (TRNV…VEAA) and 1977–2028 (INNS…PLPQ). The segment covering 1900–1912 (PQTPQPPAQPQPS) has biased composition (pro residues). A compositionally biased stretch (polar residues) spans 1925–1940 (ARTQPPTTVSTGKPTS). A compositionally biased stretch (pro residues) spans 1943–1954 (PAPPPPAQPPPA). Residues 2018–2027 (PGQWQQAPLP) show a composition bias toward low complexity. Residues serine 2063, serine 2076, and serine 2079 each carry the phosphoserine modification. Composition is skewed to low complexity over residues 2112 to 2137 (QPGM…HQQP), 2146 to 2160 (QAGV…QQQA), 2196 to 2219 (QLLQ…QGSA), 2228 to 2263 (HGQF…SMGQ), and 2294 to 2305 (RILQQQQMKQQI). Disordered regions lie at residues 2112–2263 (QPGM…SMGQ) and 2294–2433 (RILQ…TTGD). Polar residues-rich tracts occupy residues 2315–2327 (SPQQ…QPQA) and 2334–2343 (QIATSLSNQV). The span at 2349 to 2372 (VQSPRPQSQPPHSSPSPRIQPQPS) shows a compositional bias: pro residues. Residue serine 2351 is modified to Phosphoserine. A compositionally biased stretch (polar residues) spans 2411–2424 (QLNTPSRSALSSEL).

Found in a complex containing NCOA2; NCOA3; IKKA; IKKB and IKBKG. Probably part of a complex with HIF1A and EP300. Interacts with GATA1; the interaction results in acetylation and enhancement of transcriptional activity of GATA1. Interacts with MAF and ZCCHC12. Interacts with DAXX; the interaction is dependent on CBP sumoylation and results in suppression of the transcriptional activity via recruitment of HDAC2 to DAXX. Interacts with phosphorylated CREB1. Interacts with CITED4 (C-terminal region). Interacts (via the TAZ-type 1 domain) with HIF1A. Interacts with SRCAP, CARM1, ELF3, MLLT7/FOXO4, N4BP2, NCOA1, NCOA3, NCOA6, PCAF, DDX5, DDX17, PELP1, PML, SMAD1, SMAD2, SMAD3, SPIB and TRERF1. Interacts with KLF1; the interaction results in acetylation of KLF1 and enhancement of its transcriptional activity. Interacts with MTDH. Interacts with NFATC4. Interacts with MAFG; the interaction acetylates MAFG in the basic region and stimulates NFE2 transcriptional activity through increasing its DNA-binding activity. Interacts with IRF2; the interaction acetylates IRF2 and regulates its activity on the H4 promoter. Interacts with IRF3 (when phosphorylated); forming the dsRNA-activated factor 1 (DRAF1), a complex which activates the transcription of the type I interferon genes. Interacts (via N-terminus) with SS18L1/CREST (via C-terminus). Interacts with MECOM. Interacts with CITED1 (via C-terminus). Interacts with FOXO1; the interaction acetylates FOXO1 and inhibits its transcriptional activity. Interacts with NPAS2, CLOCK and BMAL1. Interacts with ASF1A and ASF1B; this promotes histone acetylation. Interacts with acetylated TP53/p53 and with the acetylated histones H3 and H4. Interacts (via transactivation domain and C-terminus) with PCNA; the interaction occurs on chromatin in UV-irradiated damaged cells. Interacts with DHX9 (via N-terminus); this interaction mediates association with RNA polymerase II holoenzyme and stimulates CREB-dependent transcriptional activation. Interacts with SMAD4; negatively regulated by ZBTB7A. Interacts with DUX4 (via C-terminus). Forms a complex with KMT2A and CREB1. Interacts with DDX3X; this interaction may facilitate HNF4A acetylation. Interacts with MSX1; the interaction may inhibit MSX1 autoinactivation. Interacts with ACSS2. As to quaternary structure, (Microbial infection) Interacts with HTLV-1 Tax, p30II and HBZ. In terms of assembly, (Microbial infection) Interacts with human herpes virus 8/HHV-8 protein vIRF-1; this interaction inhibits CREBBP binding to IRF3. (Microbial infection) Interacts with HIV-1 Tat. In terms of processing, methylation of the KIX domain by CARM1 blocks association with CREB. This results in the blockade of CREB signaling, and in activation of apoptotic response. Phosphorylated by CHUK/IKKA at Ser-1382 and Ser-1386; these phosphorylations promote cell growth by switching the binding preference of CREBBP from TP53 to NF-kappa-B. Phosphorylated by _ at Ser-124 in response to DNA damage, promoting interaction with MRE11 and lactylation of MRE11. Post-translationally, sumoylation negatively regulates transcriptional activity via the recruitment of DAAX. In terms of processing, autoacetylation is required for binding to protein substrates, such as acetylated histones and acetylated TP53/p53. Autoacetylation is induced by glucose and fatty acids.

It localises to the cytoplasm. The protein resides in the nucleus. It catalyses the reaction L-lysyl-[histone] + acetyl-CoA = N(6)-acetyl-L-lysyl-[histone] + CoA + H(+). The catalysed reaction is L-lysyl-[protein] + acetyl-CoA = N(6)-acetyl-L-lysyl-[protein] + CoA + H(+). It carries out the reaction (S)-lactoyl-CoA + L-lysyl-[protein] = N(6)-[(S)-lactoyl]-L-lysyl-[protein] + CoA + H(+). In terms of biological role, acetylates histones, giving a specific tag for transcriptional activation. Mediates acetylation of histone H3 at 'Lys-18' and 'Lys-27' (H3K18ac and H3K27ac, respectively). Also acetylates non-histone proteins, like DDX21, FBL, IRF2, MAFG, NCOA3, POLR1E/PAF53 and FOXO1. Binds specifically to phosphorylated CREB and enhances its transcriptional activity toward cAMP-responsive genes. Acts as a coactivator of ALX1. Acts as a circadian transcriptional coactivator which enhances the activity of the circadian transcriptional activators: NPAS2-BMAL1 and CLOCK-BMAL1 heterodimers. Acetylates PCNA; acetylation promotes removal of chromatin-bound PCNA and its degradation during nucleotide excision repair (NER). Acetylates POLR1E/PAF53, leading to decreased association of RNA polymerase I with the rDNA promoter region and coding region. Acetylates DDX21, thereby inhibiting DDX21 helicase activity. Acetylates FBL, preventing methylation of 'Gln-105' of histone H2A (H2AQ104me). In addition to protein acetyltransferase, can use different acyl-CoA substrates, such as lactoyl-CoA, and is able to mediate protein lactylation. Catalyzes lactylation of MRE11 in response to DNA damage, thereby promoting DNA double-strand breaks (DSBs) via homologous recombination (HR). Functions as a transcriptional coactivator for SMAD4 in the TGF-beta signaling pathway. In Homo sapiens (Human), this protein is CREB-binding protein.